A 418-amino-acid chain; its full sequence is Gamma-glutamyl phosphate reductase (418 aa).

Belongs to the gamma-glutamyl phosphate reductase family.

It is found in the cytoplasm. It catalyses the reaction L-glutamate 5-semialdehyde + phosphate + NADP(+) = L-glutamyl 5-phosphate + NADPH + H(+). It functions in the pathway amino-acid biosynthesis; L-proline biosynthesis; L-glutamate 5-semialdehyde from L-glutamate: step 2/2. Its function is as follows. Catalyzes the NADPH-dependent reduction of L-glutamate 5-phosphate into L-glutamate 5-semialdehyde and phosphate. The product spontaneously undergoes cyclization to form 1-pyrroline-5-carboxylate. This Halothermothrix orenii (strain H 168 / OCM 544 / DSM 9562) protein is Gamma-glutamyl phosphate reductase.